A 166-amino-acid polypeptide reads, in one-letter code: NAD(P)H-quinone oxidoreductase subunit I, chloroplastic (166 aa).

4Fe-4S ferredoxin-type domains are found at residues G55 to K84 and L95 to E124. C64, C67, C70, C74, C104, C107, C110, and C114 together coordinate [4Fe-4S] cluster.

Belongs to the complex I 23 kDa subunit family. In terms of assembly, NDH is composed of at least 16 different subunits, 5 of which are encoded in the nucleus. [4Fe-4S] cluster serves as cofactor.

Its subcellular location is the plastid. The protein resides in the chloroplast thylakoid membrane. The catalysed reaction is a plastoquinone + NADH + (n+1) H(+)(in) = a plastoquinol + NAD(+) + n H(+)(out). It carries out the reaction a plastoquinone + NADPH + (n+1) H(+)(in) = a plastoquinol + NADP(+) + n H(+)(out). Functionally, NDH shuttles electrons from NAD(P)H:plastoquinone, via FMN and iron-sulfur (Fe-S) centers, to quinones in the photosynthetic chain and possibly in a chloroplast respiratory chain. The immediate electron acceptor for the enzyme in this species is believed to be plastoquinone. Couples the redox reaction to proton translocation, and thus conserves the redox energy in a proton gradient. This Rensonia salvadorica protein is NAD(P)H-quinone oxidoreductase subunit I, chloroplastic.